A 343-amino-acid chain; its full sequence is MKFVDSASIFVQAGEGGRGCVSFRREKFVPKGGPDGGDGGNGGNVWLRTNSHLTTLLDFKYRKKYLAPRGSHGQGSRKSGRKGADIYIDVPCGTLVRNAATQELLADMTGDGEEVMIARGGHGGRGNQHFATSTNQAPRRSEPGWKGEELQLDMELKLMADVGLVGFPNAGKSTLISVLSAARPKIADYPFTTLVPNLGIVRYEEYKSFVMADIPGIIEGAAEGRGLGLQFLRHIERTKILAVLVSADAEDVEAEYQTLVGELEKFGRGLDEKPRILVVTKMDIAPEDFTLPAPGDEVHVLAISSVAGMGLKELKDELWREVSMRDRPEESSDPEGEGDGGTP.

The 159-residue stretch at 1–159 folds into the Obg domain; sequence MKFVDSASIF…LQLDMELKLM (159 aa). Residues 121–144 are disordered; the sequence is GHGGRGNQHFATSTNQAPRRSEPG. Over residues 129 to 138 the composition is skewed to polar residues; sequence HFATSTNQAP. In terms of domain architecture, OBG-type G spans 160–323; it reads ADVGLVGFPN…LKDELWREVS (164 aa). GTP contacts are provided by residues 166 to 173, 191 to 195, 213 to 216, 280 to 283, and 304 to 306; these read GFPNAGKS, FTTLV, DIPG, TKMD, and SSV. 2 residues coordinate Mg(2+): Ser173 and Thr193. Residues 322-343 are disordered; sequence VSMRDRPEESSDPEGEGDGGTP. Over residues 331-343 the composition is skewed to acidic residues; it reads SSDPEGEGDGGTP.

The protein belongs to the TRAFAC class OBG-HflX-like GTPase superfamily. OBG GTPase family. Monomer. The cofactor is Mg(2+).

Its subcellular location is the cytoplasm. An essential GTPase which binds GTP, GDP and possibly (p)ppGpp with moderate affinity, with high nucleotide exchange rates and a fairly low GTP hydrolysis rate. Plays a role in control of the cell cycle, stress response, ribosome biogenesis and in those bacteria that undergo differentiation, in morphogenesis control. This Chlorobium luteolum (strain DSM 273 / BCRC 81028 / 2530) (Pelodictyon luteolum) protein is GTPase Obg.